A 463-amino-acid polypeptide reads, in one-letter code: ATP synthase subunit beta (463 aa).

Residue 153–160 (GGAGVGKT) coordinates ATP.

The protein belongs to the ATPase alpha/beta chains family. As to quaternary structure, F-type ATPases have 2 components, CF(1) - the catalytic core - and CF(0) - the membrane proton channel. CF(1) has five subunits: alpha(3), beta(3), gamma(1), delta(1), epsilon(1). CF(0) has three main subunits: a(1), b(2) and c(9-12). The alpha and beta chains form an alternating ring which encloses part of the gamma chain. CF(1) is attached to CF(0) by a central stalk formed by the gamma and epsilon chains, while a peripheral stalk is formed by the delta and b chains.

Its subcellular location is the cell inner membrane. The enzyme catalyses ATP + H2O + 4 H(+)(in) = ADP + phosphate + 5 H(+)(out). Its function is as follows. Produces ATP from ADP in the presence of a proton gradient across the membrane. The catalytic sites are hosted primarily by the beta subunits. This is ATP synthase subunit beta from Burkholderia cepacia (Pseudomonas cepacia).